The primary structure comprises 459 residues: UDP-N-acetylmuramoylalanine--D-glutamate ligase (459 aa).

Glycine 119 to threonine 125 serves as a coordination point for ATP.

This sequence belongs to the MurCDEF family.

The protein localises to the cytoplasm. It catalyses the reaction UDP-N-acetyl-alpha-D-muramoyl-L-alanine + D-glutamate + ATP = UDP-N-acetyl-alpha-D-muramoyl-L-alanyl-D-glutamate + ADP + phosphate + H(+). It participates in cell wall biogenesis; peptidoglycan biosynthesis. Its function is as follows. Cell wall formation. Catalyzes the addition of glutamate to the nucleotide precursor UDP-N-acetylmuramoyl-L-alanine (UMA). The sequence is that of UDP-N-acetylmuramoylalanine--D-glutamate ligase from Lactiplantibacillus plantarum (strain ATCC BAA-793 / NCIMB 8826 / WCFS1) (Lactobacillus plantarum).